An 873-amino-acid polypeptide reads, in one-letter code: DNA mismatch repair protein MutS (873 aa).

The disordered stretch occupies residues 1 to 34; the sequence is MAAIPTPRLHRGVTHLSRQTKSRARHPMSTPQHT. The segment covering 8–26 has biased composition (basic residues); the sequence is RLHRGVTHLSRQTKSRARH. 635 to 642 serves as a coordination point for ATP; it reads GPNMGGKS.

This sequence belongs to the DNA mismatch repair MutS family.

This protein is involved in the repair of mismatches in DNA. It is possible that it carries out the mismatch recognition step. This protein has a weak ATPase activity. The polypeptide is DNA mismatch repair protein MutS (Chromobacterium violaceum (strain ATCC 12472 / DSM 30191 / JCM 1249 / CCUG 213 / NBRC 12614 / NCIMB 9131 / NCTC 9757 / MK)).